A 331-amino-acid chain; its full sequence is Probable serine hydrolase (331 aa).

Residues 1–28 form a disordered region; it reads MGQTRVAATTAAQSPAAELSPETNGQTE. Over residues 7–17 the composition is skewed to low complexity; it reads AATTAAQSPAA. One can recognise an AB hydrolase-1 domain in the interval 63-163; the sequence is PIIALHGWQD…EVEKLINIDI (101 aa). S138 is a catalytic residue.

The protein belongs to the AB hydrolase superfamily. As to expression, ubiquitously expressed before embryonic stage 11. At stage 11, expression is concentrated in the foregut and posterior midgut. By stage 15, in gastric caeca, pharynx, posterior spiracles and anterior edge of midgut. At the end of embryogenesis, expression is confined to gastric caeca. During third instar larvae, expressed at low levels in gastric caeca, midgut and hindgut and high level in fat body.

Its function is as follows. May have a role in detoxification and digestion during embryogenesis and larval development. This Drosophila melanogaster (Fruit fly) protein is Probable serine hydrolase (kraken).